The chain runs to 378 residues: MYDSLDFDALEAAGIANPRERAGLLTYLDELGFTVEEMVQAERRGRLFGLAGDVLLWSGPPIYTLATAADELGLSADDVARAWSLLGLTVAGPDVPTLSQADVDALATWVALKALVGEDGAFGLLRVLGTAMARLAEAESTMIRAGSPNIQMTHTHDELATARAYRAAAEFVPRIGALIDTVHRHHLASARTYFEGVIGDTSASVTCGIGFADLSSFTALTQALTPAQLQDLLTEFDAAVTDVVHADGGRLVKFIGDAVMWVSSSPERLVRAAVDLVDHPGARAAELQVRAGLAYGTVLALNGDYFGNPVNLAARLVAAAAPGQILAAAQLRDMLPDWPALAHGPLTLKGFDAPVMAFELHDNPRARDADTPSPAASD.

Residues 208 to 317 (GIGFADLSSF…NPVNLAARLV (110 aa)) enclose the Guanylate cyclase domain.

This sequence belongs to the adenylyl cyclase class-4/guanylyl cyclase family.

This is an uncharacterized protein from Mycobacterium bovis (strain ATCC BAA-935 / AF2122/97).